The sequence spans 212 residues: Adenylate kinase (212 aa).

10–15 (GAGKGT) is an ATP binding site. The segment at 30-59 (STGDMFRAAMANQTEMGRLAKSYIDKGELV) is NMP. AMP contacts are provided by residues Thr31, Arg36, 57-59 (ELV), 86-89 (GYPR), and Gln93. Positions 127–159 (GRIINRKTGETFHKVFNPPVDYKEEDYYQREDD) are LID. ATP-binding positions include Arg128 and 137–138 (TF). Arg156 and Arg167 together coordinate AMP. Gln195 lines the ATP pocket.

It belongs to the adenylate kinase family. Monomer.

Its subcellular location is the cytoplasm. The catalysed reaction is AMP + ATP = 2 ADP. It functions in the pathway purine metabolism; AMP biosynthesis via salvage pathway; AMP from ADP: step 1/1. Functionally, catalyzes the reversible transfer of the terminal phosphate group between ATP and AMP. Plays an important role in cellular energy homeostasis and in adenine nucleotide metabolism. The polypeptide is Adenylate kinase (Streptococcus pyogenes serotype M1).